The following is a 268-amino-acid chain: TodF product hydratase (268 aa).

This sequence belongs to the hydratase/decarboxylase family.

Its pathway is xenobiotic degradation; toluene degradation. Its function is as follows. Converts the product of 2-hydroxy-6-oxo-2,4-heptadienoate hydrolase. In Pseudomonas putida (strain ATCC 700007 / DSM 6899 / JCM 31910 / BCRC 17059 / LMG 24140 / F1), this protein is TodF product hydratase (todJ).